Consider the following 92-residue polypeptide: uncharacterized protein (92 aa).

This is an uncharacterized protein from Enterobacteria phage T4 (Bacteriophage T4).